A 431-amino-acid chain; its full sequence is Ubiquitin-like modifier-activating enzyme 5 (431 aa).

ATP contacts are provided by Gly92, Asp113, Lys136, Asn159, and Asn197. Positions 239 and 242 each coordinate Zn(2+). Cys263 acts as the Glycyl thioester intermediate in catalysis. Positions 316 and 321 each coordinate Zn(2+). The tract at residues 339-396 is disordered; it reads AKAKMEADASTTIDEGPLHDDNEWNISVVDDENEKDTTKAASSSDTLPEGLTRELPVA.

Belongs to the ubiquitin-activating E1 family. UBA5 subfamily.

E1-like enzyme which activates UFM1. This Arabidopsis thaliana (Mouse-ear cress) protein is Ubiquitin-like modifier-activating enzyme 5.